A 204-amino-acid chain; its full sequence is Pre-mRNA leakage protein 1 (204 aa).

Residues 104 to 172 enclose the FHA domain; sequence YLVGRELGHS…NGTCLNNVVI (69 aa).

In terms of assembly, belongs to the pre-mRNA retention and splicing (RES) complex composed of at least BUD13, IST3 and PML1.

It is found in the cytoplasm. The protein localises to the nucleus. In terms of biological role, required for efficient splicing and pre-mRNA nuclear retention. In Saccharomyces cerevisiae (strain ATCC 204508 / S288c) (Baker's yeast), this protein is Pre-mRNA leakage protein 1 (PML1).